Consider the following 1179-residue polypeptide: Putative ankyrin repeat protein RF_0381 (1179 aa).

ANK repeat units follow at residues 282–311, 604–633, 637–666, 670–699, 703–732, 736–765, 769–798, 802–831, 833–860, 864–893, 897–926, 930–959, 963–992, 996–1025, 1029–1058, 1062–1091, 1095–1124, and 1128–1157; these read NGYQ…MHRQ, NKDQ…NPNA, HGVI…DVNA, NGET…NIHA, NGET…DVNA, NGLT…DVNA, SGET…DVNA, NGET…NVNN, KTIL…DIHA, SGET…DIHA, SGET…DINT, DGLT…DVNA, and SGET…DINL.

This Rickettsia felis (strain ATCC VR-1525 / URRWXCal2) (Rickettsia azadi) protein is Putative ankyrin repeat protein RF_0381.